Consider the following 389-residue polypeptide: Chorismate synthase (389 aa).

2 residues coordinate NADP(+): R41 and R47. FMN contacts are provided by residues 129–131 (RSS), 247–248 (NA), G291, 306–310 (KPIST), and R332.

The protein belongs to the chorismate synthase family. As to quaternary structure, homotetramer. It depends on FMNH2 as a cofactor.

The enzyme catalyses 5-O-(1-carboxyvinyl)-3-phosphoshikimate = chorismate + phosphate. The protein operates within metabolic intermediate biosynthesis; chorismate biosynthesis; chorismate from D-erythrose 4-phosphate and phosphoenolpyruvate: step 7/7. Its function is as follows. Catalyzes the anti-1,4-elimination of the C-3 phosphate and the C-6 proR hydrogen from 5-enolpyruvylshikimate-3-phosphate (EPSP) to yield chorismate, which is the branch point compound that serves as the starting substrate for the three terminal pathways of aromatic amino acid biosynthesis. This reaction introduces a second double bond into the aromatic ring system. The protein is Chorismate synthase of Rubrobacter xylanophilus (strain DSM 9941 / JCM 11954 / NBRC 16129 / PRD-1).